Here is a 36-residue protein sequence, read N- to C-terminus: F420-dependent NADP reductase (36 aa).

9-12 (TGNI) provides a ligand contact to NADP(+).

Belongs to the F420-dependent NADP reductase family. As to quaternary structure, homotetramer.

It catalyses the reaction reduced coenzyme F420-(gamma-L-Glu)(n) + NADP(+) = oxidized coenzyme F420-(gamma-L-Glu)(n) + NADPH + 2 H(+). In terms of biological role, catalyzes the reduction of NADP(+) with F420H(2) via hydride transfer, and the reverse reaction, i.e. the reduction of F420 with NADPH. In M.organophilum, an alcohol-fermenting methanogen containing an NADP-dependent alcohol dehydrogenase, is probably involved in the regeneration of F420H(2) required for CO(2) reduction to methane. Thus, during growth on alcohol and CO(2), the F420-dependent NADP reductase probably has the function of coupling the NADP-dependent oxidation of the alcohol to the aldehyde with the F420-dependent reduction of CO(2) to methane. This is F420-dependent NADP reductase (fno) from Methanogenium organophilum.